A 212-amino-acid polypeptide reads, in one-letter code: Peptide methionine sulfoxide reductase MsrA (212 aa).

C52 is a catalytic residue.

It belongs to the MsrA Met sulfoxide reductase family.

The enzyme catalyses L-methionyl-[protein] + [thioredoxin]-disulfide + H2O = L-methionyl-(S)-S-oxide-[protein] + [thioredoxin]-dithiol. It catalyses the reaction [thioredoxin]-disulfide + L-methionine + H2O = L-methionine (S)-S-oxide + [thioredoxin]-dithiol. Has an important function as a repair enzyme for proteins that have been inactivated by oxidation. Catalyzes the reversible oxidation-reduction of methionine sulfoxide in proteins to methionine. The sequence is that of Peptide methionine sulfoxide reductase MsrA from Escherichia fergusonii (strain ATCC 35469 / DSM 13698 / CCUG 18766 / IAM 14443 / JCM 21226 / LMG 7866 / NBRC 102419 / NCTC 12128 / CDC 0568-73).